The following is a 2635-amino-acid chain: Protein unc-79 homolog (2635 aa).

2 positions are modified to phosphoserine: serine 754 and serine 758. 6 disordered regions span residues glycine 907–glutamate 929, isoleucine 1538–arginine 1575, leucine 1607–serine 1678, serine 1693–glutamine 1832, leucine 1863–arginine 1909, and leucine 1929–glycine 1950. Over residues serine 1666–serine 1678 the composition is skewed to low complexity. Residues lysine 1699–alanine 1713 are compositionally biased toward polar residues. The span at leucine 1761–glycine 1775 shows a compositional bias: basic and acidic residues. Composition is skewed to polar residues over residues glutamate 1897–arginine 1909 and leucine 1929–isoleucine 1947. 2 consecutive transmembrane segments (helical) span residues leucine 2223–glycine 2243 and valine 2466–cysteine 2486.

This sequence belongs to the unc-79 family. NALCN complex consists of NALCN and auxiliary subunits, UNC79, UNC80 and NACL1. These auxiliary subunits are essential for the NALCN channel function. UNC80 bridges NALCN to UNC79.

It localises to the cell membrane. Auxiliary subunit of the NALCN sodium channel complex, a voltage-gated ion channel responsible for the resting Na(+) permeability that controls neuronal excitability. Activated by neuropeptides substance P, neurotensin, and extracellular calcium that regulates neuronal excitability by controlling the sizes of NALCN-dependent sodium-leak current. In Homo sapiens (Human), this protein is Protein unc-79 homolog (UNC79).